Reading from the N-terminus, the 607-residue chain is MLNERDFDLIFDSYDFKHEGKVHLSNFLPIINDLQLLHPASAPPLLSEFQKQCTLEFVRQNADLSITKDNFRDVYKKLTENEDDSFANQAEKPSMEQQNSKNSIKEDANEHSVNSAHSKSSSNASPESLNPSQMMSKRLSLPPMSQFTDSDFVNILRTPFAQSTPLNRNTSSRNTEMPLVRKDKPDFSNGHHDLIKQITELQDMLDKARDQARKKSRTVDILEGKVNELTHQLNMADSKYNESKVANNSQNNQIKTLKAQNLNIHKNFQKIQSELIQTNSGLYSTKKELSALQVRYATLLRKFTDQTKKIEELSLAASRSSENENTIRRLALENHELKNSNNQLNNHIDDLTREKHLIALSNNPKGDEFLSPSNLDEMVYSKEVGLSFTQPSVCISIPAVGMRESEELRELEFKCKQQKKTIEECKHISQSLQSSLTAESSRNKELVAGFLMLSEEIGIQKWIIQSLSKMSPTLNDFCRRYDSSMPTYEESSHECTVLSSFSDDETGLMATNTTMNNSSKDFMASQDTVNADNPHFLATKGQPLLLLSVMKSNILRLFYVLFLFACFYGLDYILCAELLQAFLRVVFTFCEHIIILLYGRYELVQPS.

Positions 83-135 are disordered; the sequence is DDSFANQAEKPSMEQQNSKNSIKEDANEHSVNSAHSKSSSNASPESLNPSQMM. Over residues 111–132 the composition is skewed to low complexity; it reads HSVNSAHSKSSSNASPESLNPS.

Interacts with mcp1 and sad1.

It localises to the cytoplasm. The protein localises to the cytoskeleton. The protein resides in the microtubule organizing center. It is found in the spindle pole body. In terms of biological role, has a role in karyogamy, recombination and segregation during meiosis. Although it has been shown to associate with the spindle pole body it is unlikely to be involved in its formation or maintenance. The protein is Karyogamy meiotic segregation protein 1 (kms1) of Schizosaccharomyces pombe (strain 972 / ATCC 24843) (Fission yeast).